Consider the following 725-residue polypeptide: Heme/hemopexin utilization protein C (725 aa).

Residues 1–21 (MRFSKLSLAIATTLVTANALA) form the signal peptide. In terms of domain architecture, TBDR plug spans 36–147 (DPSRFAYTPE…LGGVVAMRTP (112 aa)). Residues 158 to 725 (KFGVKIRQGY…NAKISAVYSF (568 aa)) enclose the TBDR beta-barrel domain. Positions 708 to 725 (SLMEGTGRNAKISAVYSF) match the TonB C-terminal box motif.

It belongs to the TonB-dependent receptor family.

The protein resides in the cell outer membrane. Its function is as follows. Required for utilization of free heme at low concentrations. The polypeptide is Heme/hemopexin utilization protein C (hxuC) (Haemophilus influenzae).